A 180-amino-acid polypeptide reads, in one-letter code: Large ribosomal subunit protein uL6 (180 aa).

Belongs to the universal ribosomal protein uL6 family. Part of the 50S ribosomal subunit.

Functionally, this protein binds to the 23S rRNA, and is important in its secondary structure. It is located near the subunit interface in the base of the L7/L12 stalk, and near the tRNA binding site of the peptidyltransferase center. The protein is Large ribosomal subunit protein uL6 of Clostridium botulinum (strain Alaska E43 / Type E3).